The following is a 1164-amino-acid chain: MKKNTDSEMDQRLGYKFLVPDPKAGVFYRPLHFQYVSYSNFILHRLHEILTVKRPLLSFKNNTERIMIEISNVKVTPPDYSPIIASIKGKSYDALATFTVNIFKEVMTKEGISITKISSYEGKDSHLIKIPLLIGYGNKNPLDTAKYLVPNVIGGVFINKQSVEKVGINLVEKITTWPKFRVVKPNSFTFSFSSVSPPNVLPTRYRHYKISLDISQLEASNISSTKTFITVNIVLLSQYLSRVSLEFIRRSLSYDMPPEVVYLVNAIIDSAKRLTESITDFNIDTYINDLVEAEHIKQKSQLTINEFKYEMLHNFLPHMNYTPDQLKGFYMISLLRKFLYCIYHTSRYPDRDSMVCHRILTYGKYFETLAHDELENYIGNIRNDIMNNHKNRGTYAVNIHVLTTPGLNHAFSSLLSGKFKKSDGSYRTHPHYSWMQNISIPRSVGFYPDQVKISKMFSVRKYHPSQYLYFCSSDVPERGPQVGLVSQLSVLSSITNILTSEYLDLEKKICEYIRSYYKDDISYFETGFPITIENALVASLNPNMICDFVTDFRRRKRMGFFGNLEVGITLVRDHMNEIRINIGAGRLVRPFLVVDNGELMMDVCPELESRLDDMTFSDIQKEFPHVIEMVDIEQFTFSNVCESVQKFRMMSKDERKQYDLCDFPAEFRDGYVASSLVGINHNSGPRAILGCAQAKQAISCLSSDIRNKIDNGIHLMYPERPIVISKALETSKIAANCFGQHVTIALMSYKGINQEDGIIIKKQFIQRGGLDIVTAKKHQVEIPLENFNNKERDRSNAYSKLESNGLVRLNAFLESGDAMARNISSRTLEDDFARDNQISFDVSEKYTDMYKSRVERVQVELTDKVKVRVLTMKERRPILGDKFTTRTSQKGTVAYIADETELPYDENGITPDVIINSTSIFSRKTISMLIEVILTAAYSAKPYNNKGENRPVCFPSSNETSIDTYMQFAKQCYEHSNPKLSDEELSDKIFCEKILYDPETDKPYASKVFFGPIYYLRLRHLTQDKATVRCRGKKTKLIRQANEGRKRGGGIKFGEMERDCLIAHGAANTITEVLKDSEEDYQDVYVCENCGDIAAQIKGINTCLRCSKLNLSPLLTKIDTTHVSKVFLTQMNARGVKVKLDFERRPPSFYKPLDKVDLKPSFLA.

It belongs to the RNA polymerase beta chain family. The DNA-dependent RNA polymerase used for intermediate and late genes expression consists of eight subunits (147) kDa, (133) kDa, (35) kDa, (30) kDa, (22) kDa, (19) kDa, (18) kDa and (7) kDa totalling more than 500 kDa in mass. The same holoenzyme, with the addition of the transcription-specificity factor RAP94, is used for early gene expression.

It is found in the virion. The catalysed reaction is RNA(n) + a ribonucleoside 5'-triphosphate = RNA(n+1) + diphosphate. In terms of biological role, part of the DNA-dependent RNA polymerase which catalyzes the transcription of viral DNA into RNA using the four ribonucleoside triphosphates as substrates. Responsible for the transcription of early, intermediate and late genes. DNA-dependent RNA polymerase associates with the early transcription factor (ETF), itself composed of D6 and A7, thereby allowing the early genes transcription. Late transcription, and probably also intermediate transcription, require newly synthesized RNA polymerase. The chain is DNA-directed RNA polymerase 132 kDa polypeptide (RPO132) from Bos taurus (Bovine).